Consider the following 189-residue polypeptide: Putative dihydrofolate reductase (189 aa).

The DHFR domain maps to 3–185 (KMNLIVAMDA…LKFEFCKWKV (183 aa)). NADP(+)-binding positions include Ala9 and 15 to 21 (GIGKNGV). 29 to 34 (DMQYFA) lines the substrate pocket. NADP(+) is bound at residue 53-55 (RKC). Residue Arg69 participates in substrate binding. NADP(+) contacts are provided by residues 75-77 (SRQ) and 115-122 (GGAEIYDL).

The protein belongs to the dihydrofolate reductase family.

The enzyme catalyses (6S)-5,6,7,8-tetrahydrofolate + NADP(+) = 7,8-dihydrofolate + NADPH + H(+). It functions in the pathway cofactor biosynthesis; tetrahydrofolate biosynthesis; 5,6,7,8-tetrahydrofolate from 7,8-dihydrofolate: step 1/1. Functionally, key enzyme in folate metabolism. Catalyzes an essential reaction for de novo glycine and purine synthesis, and for DNA precursor synthesis. The sequence is that of Putative dihydrofolate reductase (dhfr-1) from Caenorhabditis elegans.